Consider the following 108-residue polypeptide: Large ribosomal subunit protein P1 (108 aa).

Residues Pro67 to Gly108 form a disordered region. Positions Lys84–Ala99 are enriched in acidic residues.

This sequence belongs to the eukaryotic ribosomal protein P1/P2 family. As to quaternary structure, part of the 50S ribosomal subunit. Homodimer, it forms part of the ribosomal stalk which helps the ribosome interact with GTP-bound translation factors. Forms a heptameric uL10/P0(P1)2(P1)2(P1)2 complex, where uL10/P0 forms an elongated spine to which the P1 dimers bind in a sequential fashion.

Functionally, forms part of the ribosomal stalk, playing a central role in the interaction of the ribosome with GTP-bound translation factors. The stalk complex of P.horikoshii binds to E.coli large subunits and confers on them the ability to interact with eukaryotic elongation factors. Each succesive P1 dimer bound along the P0 spine increases the GTPase activity of elongation factors and increases translation by reconsituted ribosomes. In Pyrococcus horikoshii (strain ATCC 700860 / DSM 12428 / JCM 9974 / NBRC 100139 / OT-3), this protein is Large ribosomal subunit protein P1.